Here is a 245-residue protein sequence, read N- to C-terminus: MGKVNKYIVEKINNGEKLHFTLIDPDRVNDLGKLEETAIKMAEFGTDAFLIGGSLGVTPEEAGETAKILKKTGLPVIIFPGNINCLTPYADAVLFMILMNSMEQYYLMHAQIAAAPIIKKYKLETLPTGYIVIYGETAVAHVGRTYPIPVSKPEILLSYTWAAEMIGIKYIYLEAGSGSPKPVPPSFPAIVKKYTNLITIVGGGIRSPFIAKELASSGADIIVTGTIVEEDPDKASKIISAIKKN.

Residues Asp24 and Ser54 each contribute to the Mg(2+) site. Sn-glycerol 1-phosphate is bound by residues 172-178 (YLEAGSG), 203-204 (GG), and 225-226 (GT).

The protein belongs to the GGGP/HepGP synthase family. Group II subfamily. It depends on Mg(2+) as a cofactor.

Its subcellular location is the cytoplasm. It carries out the reaction sn-glycerol 1-phosphate + (2E,6E,10E)-geranylgeranyl diphosphate = sn-3-O-(geranylgeranyl)glycerol 1-phosphate + diphosphate. It participates in membrane lipid metabolism; glycerophospholipid metabolism. In terms of biological role, prenyltransferase that catalyzes the transfer of the geranylgeranyl moiety of geranylgeranyl diphosphate (GGPP) to the C3 hydroxyl of sn-glycerol-1-phosphate (G1P). This reaction is the first ether-bond-formation step in the biosynthesis of archaeal membrane lipids. In Staphylothermus marinus (strain ATCC 43588 / DSM 3639 / JCM 9404 / F1), this protein is Geranylgeranylglyceryl phosphate synthase.